Reading from the N-terminus, the 151-residue chain is Cytochrome c-type biogenesis protein CcmE 1 (151 aa).

At 1–8 (MNPLRKKR) the chain is on the cytoplasmic side. Residues 9 to 29 (LIIILAILVGVGAAVGLALSA) form a helical; Signal-anchor for type II membrane protein membrane-spanning segment. Over 30 to 151 (LQQNINLFYT…QSAPTPAKEG (122 aa)) the chain is Periplasmic. Heme is bound by residues histidine 124 and tyrosine 128. A disordered region spans residues 131–151 (PEVTKALKDSGQSAPTPAKEG).

The protein belongs to the CcmE/CycJ family.

It is found in the cell inner membrane. In terms of biological role, heme chaperone required for the biogenesis of c-type cytochromes. Transiently binds heme delivered by CcmC and transfers the heme to apo-cytochromes in a process facilitated by CcmF and CcmH. This Pseudomonas fluorescens (strain Pf0-1) protein is Cytochrome c-type biogenesis protein CcmE 1.